We begin with the raw amino-acid sequence, 551 residues long: Delta-selinene synthase TPS7FN (551 aa).

The (2E,6E)-farnesyl diphosphate site is built by Arg266, Asp303, Asp307, Arg444, and Asp447. Positions 303 and 307 each coordinate Mg(2+). The DDXXD motif signature appears at 303 to 307 (DDIYD). Residues Asp447, Ser451, and Glu455 each coordinate Mg(2+).

This sequence belongs to the terpene synthase family. Tpsb subfamily. The cofactor is Mg(2+). Mn(2+) serves as cofactor.

It carries out the reaction (2E,6E)-farnesyl diphosphate = delta-selinene + diphosphate. The enzyme catalyses (2E)-geranyl diphosphate = beta-myrcene + diphosphate. The catalysed reaction is (2E)-geranyl diphosphate = (4S)-limonene + diphosphate. It catalyses the reaction (2E,6E)-farnesyl diphosphate + H2O = selina-6-en-4-ol + diphosphate. The protein operates within secondary metabolite biosynthesis; terpenoid biosynthesis. Involved in sesquiterpene olefins biosynthesis, constituants of cannabinoids and terpenoids-rich resins. Catalyzes mainly the conversion of (2E)-farnesyl diphosphate to delta-selinene, and also produces minor products such as selina-6-en-4-ol. Can also use (2E)-geranyl diphosphate as substrate with low efficiency, producing minor amounts of myrcene and limonene. The polypeptide is Delta-selinene synthase TPS7FN (Cannabis sativa (Hemp)).